Here is an 899-residue protein sequence, read N- to C-terminus: Bifunctional uridylyltransferase/uridylyl-removing enzyme (899 aa).

The uridylyltransferase stretch occupies residues 1–342 (MPQVDPDLFD…PGDAAGRVEP (342 aa)). A uridylyl-removing region spans residues 343–705 (LNERFQVRDG…TTQREFEGAT (363 aa)). One can recognise an HD domain in the interval 461–583 (VDAHTLNLIK…VRDQTYLDYL (123 aa)). 2 ACT domains span residues 706–789 (QIFI…IIQR) and 816–899 (ILEI…RISI).

Belongs to the GlnD family. The cofactor is Mg(2+).

It carries out the reaction [protein-PII]-L-tyrosine + UTP = [protein-PII]-uridylyl-L-tyrosine + diphosphate. It catalyses the reaction [protein-PII]-uridylyl-L-tyrosine + H2O = [protein-PII]-L-tyrosine + UMP + H(+). Uridylyltransferase (UTase) activity is inhibited by glutamine, while glutamine activates uridylyl-removing (UR) activity. In terms of biological role, modifies, by uridylylation and deuridylylation, the PII regulatory proteins (GlnB and homologs), in response to the nitrogen status of the cell that GlnD senses through the glutamine level. Under low glutamine levels, catalyzes the conversion of the PII proteins and UTP to PII-UMP and PPi, while under higher glutamine levels, GlnD hydrolyzes PII-UMP to PII and UMP (deuridylylation). Thus, controls uridylylation state and activity of the PII proteins, and plays an important role in the regulation of nitrogen fixation and metabolism. The polypeptide is Bifunctional uridylyltransferase/uridylyl-removing enzyme (Azotobacter vinelandii (strain DJ / ATCC BAA-1303)).